The primary structure comprises 1162 residues: Carbamoyl phosphate synthase large chain (1162 aa).

The carboxyphosphate synthetic domain stretch occupies residues 1–456 (MPKRTDIKSI…SLQKALRGLE (456 aa)). ATP contacts are provided by R129, R222, G228, G229, E261, V263, E268, G294, V295, H296, Q338, and E352. Residues 186–381 (ETEWQLGEVE…IAKVAAKLAV (196 aa)) form the ATP-grasp 1 domain. Mg(2+) contacts are provided by Q338, E352, and N354. Mn(2+) contacts are provided by Q338, E352, and N354. The segment at 457-613 (TGLTGFDEIA…PFVGQPRSEA (157 aa)) is oligomerization domain. The tract at residues 614 to 1025 (EVSDRKKVVI…AFAKAQLGAG (412 aa)) is carbamoyl phosphate synthetic domain. Positions 742–954 (QKLLIKLDLN…IAKVAARIMA (213 aa)) constitute an ATP-grasp 2 domain. Residues R778, T838, L840, E845, G870, I871, H872, S873, Q913, and E925 each contribute to the ATP site. Residues Q913, E925, and N927 each coordinate Mg(2+). Residues Q913, E925, and N927 each contribute to the Mn(2+) site. The MGS-like domain occupies 1026-1162 (VELPREGTVF…VRPLQDYFRS (137 aa)). Residues 1026-1162 (VELPREGTVF…VRPLQDYFRS (137 aa)) form an allosteric domain region.

It belongs to the CarB family. As to quaternary structure, composed of two chains; the small (or glutamine) chain promotes the hydrolysis of glutamine to ammonia, which is used by the large (or ammonia) chain to synthesize carbamoyl phosphate. Tetramer of heterodimers (alpha,beta)4. Requires Mg(2+) as cofactor. It depends on Mn(2+) as a cofactor.

It carries out the reaction hydrogencarbonate + L-glutamine + 2 ATP + H2O = carbamoyl phosphate + L-glutamate + 2 ADP + phosphate + 2 H(+). The enzyme catalyses hydrogencarbonate + NH4(+) + 2 ATP = carbamoyl phosphate + 2 ADP + phosphate + 2 H(+). It participates in amino-acid biosynthesis; L-arginine biosynthesis; carbamoyl phosphate from bicarbonate: step 1/1. The protein operates within pyrimidine metabolism; UMP biosynthesis via de novo pathway; (S)-dihydroorotate from bicarbonate: step 1/3. Large subunit of the glutamine-dependent carbamoyl phosphate synthetase (CPSase). CPSase catalyzes the formation of carbamoyl phosphate from the ammonia moiety of glutamine, carbonate, and phosphate donated by ATP, constituting the first step of 2 biosynthetic pathways, one leading to arginine and/or urea and the other to pyrimidine nucleotides. The large subunit (synthetase) binds the substrates ammonia (free or transferred from glutamine from the small subunit), hydrogencarbonate and ATP and carries out an ATP-coupled ligase reaction, activating hydrogencarbonate by forming carboxy phosphate which reacts with ammonia to form carbamoyl phosphate. The chain is Carbamoyl phosphate synthase large chain from Brucella suis biovar 1 (strain 1330).